The chain runs to 419 residues: Multifunctional CCA protein (419 aa).

Positions 8 and 11 each coordinate ATP. CTP is bound by residues glycine 8 and arginine 11. Mg(2+) contacts are provided by aspartate 21 and aspartate 23. 3 residues coordinate ATP: arginine 91, arginine 141, and arginine 144. The CTP site is built by arginine 91, arginine 141, and arginine 144. Residues 230–331 (TGVHVMMVLD…VRLLERCDAL (102 aa)) form the HD domain.

This sequence belongs to the tRNA nucleotidyltransferase/poly(A) polymerase family. Bacterial CCA-adding enzyme type 1 subfamily. In terms of assembly, monomer. Can also form homodimers and oligomers. The cofactor is Mg(2+). Requires Ni(2+) as cofactor.

The enzyme catalyses a tRNA precursor + 2 CTP + ATP = a tRNA with a 3' CCA end + 3 diphosphate. The catalysed reaction is a tRNA with a 3' CCA end + 2 CTP + ATP = a tRNA with a 3' CCACCA end + 3 diphosphate. In terms of biological role, catalyzes the addition and repair of the essential 3'-terminal CCA sequence in tRNAs without using a nucleic acid template. Adds these three nucleotides in the order of C, C, and A to the tRNA nucleotide-73, using CTP and ATP as substrates and producing inorganic pyrophosphate. tRNA 3'-terminal CCA addition is required both for tRNA processing and repair. Also involved in tRNA surveillance by mediating tandem CCA addition to generate a CCACCA at the 3' terminus of unstable tRNAs. While stable tRNAs receive only 3'-terminal CCA, unstable tRNAs are marked with CCACCA and rapidly degraded. This is Multifunctional CCA protein from Paracidovorax citrulli (strain AAC00-1) (Acidovorax citrulli).